Reading from the N-terminus, the 499-residue chain is Glutamate--tRNA ligase (499 aa).

Positions 12–22 (PSPTGHLHIGN) match the 'HIGH' region motif. The 'KMSKS' region motif lies at 259 to 263 (KLSKR). ATP is bound at residue K262.

Belongs to the class-I aminoacyl-tRNA synthetase family. Glutamate--tRNA ligase type 1 subfamily. Monomer.

The protein localises to the cytoplasm. The enzyme catalyses tRNA(Glu) + L-glutamate + ATP = L-glutamyl-tRNA(Glu) + AMP + diphosphate. In terms of biological role, catalyzes the attachment of glutamate to tRNA(Glu) in a two-step reaction: glutamate is first activated by ATP to form Glu-AMP and then transferred to the acceptor end of tRNA(Glu). In Lactobacillus acidophilus (strain ATCC 700396 / NCK56 / N2 / NCFM), this protein is Glutamate--tRNA ligase.